Consider the following 516-residue polypeptide: Arginyl-tRNA--protein transferase 1 (516 aa).

Positions 150–180 (IESEEKEKEKSIKKEGSKEFIHPQSIEEKLG) are enriched in basic and acidic residues. Residues 150-206 (IESEEKEKEKSIKKEGSKEFIHPQSIEEKLGSGEPSHPIKVHIGPKPGKGADLSKPP) are disordered.

The protein belongs to the R-transferase family. Monomer. Interacts with LIAT1; LIAT1 is not a substrate of ATE1, the interaction takes place in the cytoplasm and seems to increase ATE1 arginyltransferase activity. As to quaternary structure, interacts with LIAT1; has a higher affinity than the other isoforms. As to expression, widely expressed.

It is found in the nucleus. The protein localises to the cytoplasm. It catalyses the reaction an N-terminal L-alpha-aminoacyl-[protein] + L-arginyl-tRNA(Arg) = an N-terminal L-arginyl-L-aminoacyl-[protein] + tRNA(Arg) + H(+). Involved in the post-translational conjugation of arginine to the N-terminal aspartate or glutamate of a protein. This arginylation is required for degradation of the protein via the ubiquitin pathway. Does not arginylate cysteine residues. The polypeptide is Arginyl-tRNA--protein transferase 1 (Mus musculus (Mouse)).